Reading from the N-terminus, the 302-residue chain is ATP synthase gamma chain, sodium ion specific (302 aa).

This sequence belongs to the ATPase gamma chain family. F-type ATPases have 2 components, CF(1) - the catalytic core - and CF(0) - the membrane proton channel. CF(1) has five subunits: alpha(3), beta(3), gamma(1), delta(1), epsilon(1). CF(0) has three main subunits: a, b and c.

The protein resides in the cell membrane. Inhibited by nitrate. Its function is as follows. Produces ATP from ADP in the presence of a proton gradient across the membrane. The gamma chain is believed to be important in regulating ATPase activity and the flow of protons through the CF(0) complex. This Acetobacterium woodii (strain ATCC 29683 / DSM 1030 / JCM 2381 / KCTC 1655 / WB1) protein is ATP synthase gamma chain, sodium ion specific (atpG).